Reading from the N-terminus, the 283-residue chain is NAD kinase (283 aa).

The active-site Proton acceptor is the Asp-66. NAD(+)-binding positions include 66–67, 137–138, Arg-165, Asp-167, and 178–183; these read DG, ND, and TGYSLS.

It belongs to the NAD kinase family. The cofactor is a divalent metal cation.

The protein resides in the cytoplasm. The enzyme catalyses NAD(+) + ATP = ADP + NADP(+) + H(+). In terms of biological role, involved in the regulation of the intracellular balance of NAD and NADP, and is a key enzyme in the biosynthesis of NADP. Catalyzes specifically the phosphorylation on 2'-hydroxyl of the adenosine moiety of NAD to yield NADP. The chain is NAD kinase from Chloroherpeton thalassium (strain ATCC 35110 / GB-78).